A 341-amino-acid chain; its full sequence is Cell division protein ZipA (341 aa).

Residues 1–6 lie on the Periplasmic side of the membrane; the sequence is MENLQL. A helical membrane pass occupies residues 7-27; that stretch reads VLFVLGAIAIVAVLVHGFWSI. At 28 to 341 the chain is on the cytoplasmic side; it reads RKQQPKSLKE…YLQRIRTQNS (314 aa). Disordered stretches follow at residues 35–134 and 157–201; these read LKES…PVLS and QSSL…PEPE. Over residues 90-100 the composition is skewed to polar residues; that stretch reads TLTSEGQMDSS. The span at 175–190 shows a compositional bias: low complexity; the sequence is SIEVPEPVSEPVLESV. Residues 192-201 show a composition bias toward pro residues; sequence EPEPVAPEPE.

Belongs to the ZipA family. In terms of assembly, interacts with FtsZ via their C-terminal domains.

Its subcellular location is the cell inner membrane. Essential cell division protein that stabilizes the FtsZ protofilaments by cross-linking them and that serves as a cytoplasmic membrane anchor for the Z ring. Also required for the recruitment to the septal ring of downstream cell division proteins. The polypeptide is Cell division protein ZipA (Shewanella sediminis (strain HAW-EB3)).